A 592-amino-acid polypeptide reads, in one-letter code: Syntaxin-binding protein 3 (592 aa).

The mediates interaction with DOC2B stretch occupies residues 1-255 (MAPPVSERGL…STVLHELTFQ (255 aa)).

The protein belongs to the STXBP/unc-18/SEC1 family. As to quaternary structure, interacts with STX4. Interacts with DOC2B; the interaction is direct, occurs at the cell membrane, excludes interaction with STX4 and regulates glucose-stimulated insulin secretion. Phosphorylated by PKC in platelets in response to thrombin stimulation; phosphorylation inhibits binding to STX4. As to expression, ubiquitously expressed in all tissues tested.

It localises to the cytoplasm. Its subcellular location is the cytosol. The protein localises to the cell membrane. Functionally, together with STX4 and VAMP2, may play a role in insulin-dependent movement of GLUT4 and in docking/fusion of intracellular GLUT4-containing vesicles with the cell surface in adipocytes. The polypeptide is Syntaxin-binding protein 3 (Stxbp3) (Mus musculus (Mouse)).